Reading from the N-terminus, the 272-residue chain is Probable ribosomal RNA small subunit methyltransferase A (272 aa).

Asn23, Leu25, Gly50, Glu71, Asp95, and Asn110 together coordinate S-adenosyl-L-methionine.

The protein belongs to the class I-like SAM-binding methyltransferase superfamily. rRNA adenine N(6)-methyltransferase family. RsmA subfamily.

The protein localises to the cytoplasm. In terms of biological role, specifically dimethylates two adjacent adenosines in the loop of a conserved hairpin near the 3'-end of 16S rRNA in the 30S particle. May play a critical role in biogenesis of 30S subunits. This Thermococcus onnurineus (strain NA1) protein is Probable ribosomal RNA small subunit methyltransferase A.